Reading from the N-terminus, the 364-residue chain is Glycine oxidase (364 aa).

FAD-binding positions include 12 to 13 (VI), 32 to 33 (ER), 40 to 41 (AS), 45 to 47 (GGI), and Val173. Position 302 (Arg302) interacts with substrate. 327 to 333 (HYRNGLV) contacts FAD.

Belongs to the DAO family. ThiO subfamily. As to quaternary structure, monomer. It depends on FAD as a cofactor.

It catalyses the reaction glycine + O2 + H2O = glyoxylate + H2O2 + NH4(+). The enzyme catalyses sarcosine + O2 + H2O = methylamine + glyoxylate + H2O2. The protein operates within cofactor biosynthesis; thiamine diphosphate biosynthesis. Its function is as follows. Catalyzes the oxidation of glycine, leading to glyoxyl imine and hydrogen peroxide as primary products; glyoxyl imine is used for the biosynthesis of the thiazole ring of thiamine. Otherwise, glyoxyl imine is spontaneously hydrolyzed in water to produce glyoxylate and ammonia. Can also use sarcosine (N-methylglycine) as substrate. This chain is Glycine oxidase, found in Pseudomonas aeruginosa (strain ATCC 15692 / DSM 22644 / CIP 104116 / JCM 14847 / LMG 12228 / 1C / PRS 101 / PAO1).